The following is a 233-amino-acid chain: UPF0173 metal-dependent hydrolase Acid345_3437 (233 aa).

The protein belongs to the UPF0173 family.

This is UPF0173 metal-dependent hydrolase Acid345_3437 from Koribacter versatilis (strain Ellin345).